Reading from the N-terminus, the 172-residue chain is Ribosome maturation factor RimM (172 aa).

In terms of domain architecture, PRC barrel spans 94–167; that stretch reads ENEFYLFQLK…FIKVELLPGM (74 aa).

This sequence belongs to the RimM family. Binds ribosomal protein uS19.

Its subcellular location is the cytoplasm. An accessory protein needed during the final step in the assembly of 30S ribosomal subunit, possibly for assembly of the head region. Essential for efficient processing of 16S rRNA. May be needed both before and after RbfA during the maturation of 16S rRNA. It has affinity for free ribosomal 30S subunits but not for 70S ribosomes. This Carboxydothermus hydrogenoformans (strain ATCC BAA-161 / DSM 6008 / Z-2901) protein is Ribosome maturation factor RimM.